A 224-amino-acid chain; its full sequence is Cysteine S-methyltransferase NleE (224 aa).

An interaction with host proteins TAB2, TAB3 and ZRANB3 region spans residues 49-52 (GITR). 6 residues coordinate S-adenosyl-L-methionine: alanine 92, serine 98, arginine 107, glutamine 111, tyrosine 204, and glutamate 208.

Belongs to the NleE/OspZ family. Monomer.

The protein localises to the secreted. It localises to the host nucleus. The catalysed reaction is L-cysteinyl-[protein] + S-adenosyl-L-methionine = S-methyl-L-cysteinyl-[protein] + S-adenosyl-L-homocysteine + H(+). Its function is as follows. Cysteine methyltransferase effector that inhibits host cell NF-kappa-B activation by preventing nuclear translocation of host protein RELA/p65. Acts by mediating cysteine methylation of host proteins TAB2 and TAB3: methylation of a conserved cysteine residue of the RanBP2-type zinc finger (NZF) of TAB2 and TAB3 disrupts zinc-binding, thereby inactivating the ubiquitin chain-binding activity of TAB2 and TAB3, leading to NF-kappa-B inactivation. Also mediates cysteine methylation of host protein ZRANB3, inactivating its ability to bind ubiquitin chains. This Escherichia coli O127:H6 (strain E2348/69 / EPEC) protein is Cysteine S-methyltransferase NleE.